The chain runs to 579 residues: MIRTLLRLVPAEKRGAVAGYAVLTLLSVLLRAVGAVLLIPLLAALFSDTPSDAWLWLGWLTAVTLAGWVTDTNTARLGFDLGFAVLSRTQHDMADRLPNVAMSWFTPDNTATARQAIAATGPELAGLVVNLLTPLIGAALLPAAIGVALLFVSVPLGLAALAGVAVLFGALALSGRLSRAADKVAGETNSAFTERIIEFARTQQALRAARRVEPARSQVGSALAAQHGAGLRLLTMQIPGQVLFSLAGQVALIGFAGMAVWLTVRGQLGVPEAIALIVVLVRYLEPFAAIADLAPALETTRATLNRIQAVLDAPTLPAGRRRLDRTGAAPSIEFDDVRFSYGDEVVLDGVSFTLRPGNTTAIVGPSGSGKTTILSLIAGLQQPASGRVLLDGVDVTTLDPEARRAAVSVVFQHPYLFDGTLRDNVLVGDPEADPDDVTAAMRLARVDELLDRLPDGDATVVGEGGTALSGGERQRVSIARALLKPAPVLLVDEATSALDNANEAAVVDALTADPRPRTRVIVAHRLASIRHADRVLFVEAGRVVEDGAIDELLAAGGRFAQFWAQQQAASEWAIGSTAR.

At 1–25 (MIRTLLRLVPAEKRGAVAGYAVLTL) the chain is on the cytoplasmic side. The ABC transmembrane type-1 domain occupies 21-299 (AVLTLLSVLL…IADLAPALET (279 aa)). A helical membrane pass occupies residues 26–46 (LSVLLRAVGAVLLIPLLAALF). Residues 47–48 (SD) are Periplasmic-facing. The chain crosses the membrane as a helical span at residues 49–69 (TPSDAWLWLGWLTAVTLAGWV). The Cytoplasmic segment spans residues 70 to 126 (TDTNTARLGFDLGFAVLSRTQHDMADRLPNVAMSWFTPDNTATARQAIAATGPELAG). 2 helical membrane-spanning segments follow: residues 127–147 (LVVNLLTPLIGAALLPAAIGV) and 148–168 (ALLFVSVPLGLAALAGVAVLF). The Cytoplasmic portion of the chain corresponds to 169–241 (GALALSGRLS…RLLTMQIPGQ (73 aa)). A helical membrane pass occupies residues 242–262 (VLFSLAGQVALIGFAGMAVWL). At 263–272 (TVRGQLGVPE) the chain is on the periplasmic side. The helical transmembrane segment at 273–293 (AIALIVVLVRYLEPFAAIADL) threads the bilayer. At 294–579 (APALETTRAT…SEWAIGSTAR (286 aa)) the chain is on the cytoplasmic side. The 234-residue stretch at 332–565 (IEFDDVRFSY…GGRFAQFWAQ (234 aa)) folds into the ABC transporter domain. ATP is bound at residue 364–371 (GPSGSGKT).

Belongs to the ABC transporter superfamily. Siderophore-Fe(3+) uptake transporter (SIUT) (TC 3.A.1.21) family. In terms of assembly, forms a heterodimer with IrtA.

It is found in the cell inner membrane. Its activity is regulated as follows. The ATPase activity of IrtAB is stimulated more than 38-fold in the presence of Fe-MBT, and more than 10-fold in the presence of Fe-cMBT. Its function is as follows. Part of the ABC transporter complex IrtAB involved in the import of iron-bound mycobactin (Fe-MBT) and carboxymycobactin (Fe-cMBT). Has a preference for Fe-MBT over Fe-cMBT. Transmembrane domains (TMD) form a pore in the membrane and the ATP-binding domain (NBD) is responsible for energy generation. The chain is Mycobactin import ATP-binding/permease protein IrtB from Mycolicibacterium thermoresistibile (strain ATCC 19527 / DSM 44167 / CIP 105390 / JCM 6362 / NCTC 10409 / 316) (Mycobacterium thermoresistibile).